The sequence spans 397 residues: LL-diaminopimelate aminotransferase (397 aa).

2 residues coordinate substrate: Tyr-14 and Gly-41. Pyridoxal 5'-phosphate-binding positions include Tyr-71, 104-105, Tyr-128, Asn-174, Tyr-205, and 233-235; these read AK and SFS. Substrate-binding residues include Lys-105, Tyr-128, and Asn-174. The residue at position 236 (Lys-236) is an N6-(pyridoxal phosphate)lysine. Positions 244 and 275 each coordinate pyridoxal 5'-phosphate. 2 residues coordinate substrate: Asn-275 and Arg-368.

Belongs to the class-I pyridoxal-phosphate-dependent aminotransferase family. LL-diaminopimelate aminotransferase subfamily. As to quaternary structure, homodimer. It depends on pyridoxal 5'-phosphate as a cofactor.

It catalyses the reaction (2S,6S)-2,6-diaminopimelate + 2-oxoglutarate = (S)-2,3,4,5-tetrahydrodipicolinate + L-glutamate + H2O + H(+). It functions in the pathway amino-acid biosynthesis; L-lysine biosynthesis via DAP pathway; LL-2,6-diaminopimelate from (S)-tetrahydrodipicolinate (aminotransferase route): step 1/1. In terms of biological role, involved in the synthesis of meso-diaminopimelate (m-DAP or DL-DAP), required for both lysine and peptidoglycan biosynthesis. Catalyzes the direct conversion of tetrahydrodipicolinate to LL-diaminopimelate. This chain is LL-diaminopimelate aminotransferase, found in Chlamydia pneumoniae (Chlamydophila pneumoniae).